A 175-amino-acid polypeptide reads, in one-letter code: Sec-independent protein translocase protein TatB (175 aa).

Residues 1–21 (MLDLGLTKMALIGVVALVVLG) traverse the membrane as a helical segment. 2 disordered regions span residues 104 to 132 (GGAL…RKNW) and 155 to 175 (SGAA…TRFF).

This sequence belongs to the TatB family. As to quaternary structure, the Tat system comprises two distinct complexes: a TatABC complex, containing multiple copies of TatA, TatB and TatC subunits, and a separate TatA complex, containing only TatA subunits. Substrates initially bind to the TatABC complex, which probably triggers association of the separate TatA complex to form the active translocon.

Its subcellular location is the cell inner membrane. Part of the twin-arginine translocation (Tat) system that transports large folded proteins containing a characteristic twin-arginine motif in their signal peptide across membranes. Together with TatC, TatB is part of a receptor directly interacting with Tat signal peptides. TatB may form an oligomeric binding site that transiently accommodates folded Tat precursor proteins before their translocation. The sequence is that of Sec-independent protein translocase protein TatB from Paraburkholderia xenovorans (strain LB400).